Reading from the N-terminus, the 558-residue chain is Arginine--tRNA ligase (558 aa).

Positions 119–129 (ANPNGPLHVGH) match the 'HIGH' region motif.

The protein belongs to the class-I aminoacyl-tRNA synthetase family.

It is found in the cytoplasm. The enzyme catalyses tRNA(Arg) + L-arginine + ATP = L-arginyl-tRNA(Arg) + AMP + diphosphate. This chain is Arginine--tRNA ligase, found in Methanoregula boonei (strain DSM 21154 / JCM 14090 / 6A8).